The primary structure comprises 356 residues: Phospho-N-acetylmuramoyl-pentapeptide-transferase (356 aa).

10 consecutive transmembrane segments (helical) span residues 25-45, 70-90, 93-113, 138-158, 164-184, 195-215, 232-252, 258-278, 284-304, and 333-353; these read TVAAMLTSGLIVFLFGPSIIS, GTPTMGGLMILSGVVISALLW, LFNIYLWVSLFVMLFFGAIGF, FLVASIASFIILQVGSPGLAL, YFINLGWFFIPFSACVVVGLG, GLAIVPVMVASLSFALIAYLS, VGELAVLLGAVFGAGLGFLWF, AIFMGDTGSLALGGLLGIVSV, IVLIFIGGLFVLETLSVIIQV, and QIVVRFWIIAIVLALIGLSTL.

Belongs to the glycosyltransferase 4 family. MraY subfamily. Mg(2+) is required as a cofactor.

It is found in the cell inner membrane. The catalysed reaction is UDP-N-acetyl-alpha-D-muramoyl-L-alanyl-gamma-D-glutamyl-meso-2,6-diaminopimeloyl-D-alanyl-D-alanine + di-trans,octa-cis-undecaprenyl phosphate = di-trans,octa-cis-undecaprenyl diphospho-N-acetyl-alpha-D-muramoyl-L-alanyl-D-glutamyl-meso-2,6-diaminopimeloyl-D-alanyl-D-alanine + UMP. It functions in the pathway cell wall biogenesis; peptidoglycan biosynthesis. Functionally, catalyzes the initial step of the lipid cycle reactions in the biosynthesis of the cell wall peptidoglycan: transfers peptidoglycan precursor phospho-MurNAc-pentapeptide from UDP-MurNAc-pentapeptide onto the lipid carrier undecaprenyl phosphate, yielding undecaprenyl-pyrophosphoryl-MurNAc-pentapeptide, known as lipid I. This is Phospho-N-acetylmuramoyl-pentapeptide-transferase from Bartonella bacilliformis (strain ATCC 35685 / KC583 / Herrer 020/F12,63).